A 423-amino-acid chain; its full sequence is MVMMFIGIDDTDSPNKYCTTYIATLLIEELKGCGYSVDMPKLIRMNPMVKYKTRGNGGVAIHILDELYSKDKEEIKNITISLVEKYTDFECENTNPGIVFLDEAKYKENREKLTNYYKKVLYDIVSVDYAEKFILKVGGEFIKYKLGRGIIGALGAISSTPPYTYELLAYRKKEMWGKKREIDEKSVIEMDKETFPYTFDNYDYENEKILIAPNTPCPVLFGIRGIDAEILLKAMHKIEGEKPERFMIFKTNHGTDVHLRKMNIKDIYPNTGVIVYGRVVEEPRDIEGGHVIFKLSDGTGEIDCMAYEPTKGFRDIIRKLIVGDYIAVYGTVREKPLGINIEKIKILKLEKKFVKDKRCPYCGGTLKAKGKKAGYKCKKCKKTIAYDEIKMIEVERDLKTGFYEVPGSARRHLSKPIQLIDLI.

The OB DNA-binding region spans 273-347 (VIVYGRVVEE…GINIEKIKIL (75 aa)).

It belongs to the TiaS family.

It is found in the cytoplasm. It catalyses the reaction cytidine(34) in tRNA(Ile2) + agmatine + ATP + H2O = 2-agmatinylcytidine(34) in tRNA(Ile2) + AMP + 2 phosphate + 2 H(+). Its function is as follows. ATP-dependent agmatine transferase that catalyzes the formation of 2-agmatinylcytidine (agm2C) at the wobble position (C34) of tRNA(Ile2), converting the codon specificity from AUG to AUA. The polypeptide is tRNA(Ile2) 2-agmatinylcytidine synthetase TiaS (Methanocaldococcus jannaschii (strain ATCC 43067 / DSM 2661 / JAL-1 / JCM 10045 / NBRC 100440) (Methanococcus jannaschii)).